Consider the following 197-residue polypeptide: Transcription factor FapR (197 aa).

This sequence belongs to the FapR family.

Transcriptional factor involved in regulation of membrane lipid biosynthesis by repressing genes involved in fatty acid and phospholipid metabolism. The chain is Transcription factor FapR from Bacillus mycoides (strain KBAB4) (Bacillus weihenstephanensis).